A 234-amino-acid chain; its full sequence is LexA repressor (234 aa).

The segment at residues 26-46 (FDEMKDALDLRSKSGIHRLIT) is a DNA-binding region (H-T-H motif). A disordered region spans residues 80–107 (RGFTPSVIEGNLGKVRPPSPQHAEDDSD). Residues Ser-155 and Lys-193 each act as for autocatalytic cleavage activity in the active site.

This sequence belongs to the peptidase S24 family. Homodimer.

It catalyses the reaction Hydrolysis of Ala-|-Gly bond in repressor LexA.. Its function is as follows. Represses a number of genes involved in the response to DNA damage (SOS response), including recA and lexA. In the presence of single-stranded DNA, RecA interacts with LexA causing an autocatalytic cleavage which disrupts the DNA-binding part of LexA, leading to derepression of the SOS regulon and eventually DNA repair. The chain is LexA repressor from Rhodopseudomonas palustris (strain HaA2).